The chain runs to 601 residues: Urocanate hydratase (601 aa).

NAD(+) is bound by residues Gly-63–Gly-64 and Gln-141. The segment at Ser-172 to Gly-201 is insert. The segment at Leu-179–Pro-200 is disordered. NAD(+) is bound by residues Gly-216 to Gly-218, Glu-236, Asn-282 to Ala-283, Gln-307 to His-311, Tyr-317 to Leu-318, and Tyr-368. Cys-456 is a catalytic residue. Gly-538 provides a ligand contact to NAD(+).

It belongs to the urocanase family. Requires NAD(+) as cofactor.

It localises to the cytoplasm. The catalysed reaction is 4-imidazolone-5-propanoate = trans-urocanate + H2O. Its pathway is amino-acid degradation; L-histidine degradation into L-glutamate; N-formimidoyl-L-glutamate from L-histidine: step 2/3. Functionally, catalyzes the conversion of urocanate to 4-imidazolone-5-propionate. The chain is Urocanate hydratase from Ralstonia nicotianae (strain ATCC BAA-1114 / GMI1000) (Ralstonia solanacearum).